We begin with the raw amino-acid sequence, 399 residues long: PCI domain-containing protein 2 (399 aa).

Residues 210–391 enclose the PCI domain; sequence VTYKYYVGRK…QKLVVSKQNP (182 aa).

It belongs to the CSN12 family.

The sequence is that of PCI domain-containing protein 2 (pcid2) from Danio rerio (Zebrafish).